Consider the following 447-residue polypeptide: SVGFKAGVKDYRLTYYTPDYETKDTDILAAFRVTPQPGVPPEEAGAAVAAESSTGTWTTVWTDGLTSLDRYKGRCYHIEAVVGEENQFIAYVAYPLDLFEEGSVTNMFTSIVGNVFGFKALRALRLEDLRIPPAYSKTFQGPPHGIQVERDKLNKYGRPLLGCTIKPKLGLSAKNYGRAVYECLRGGLDFTKDDENVNSQPFMRWRDRFLFCAEAIYKAQAETGEIKGHYLNATAGTCEEMIKRAIFARELGVPIVMHDYLTGGFTANTSLAHYCRDNGLLLHIHRAMHAVIDRQKNHGMHFRVLAKALRMSGGDHIHAGTVVGKLEGEREMTLGFVDLLRDDFIEKDRSRGIFFTQDWVSMPGVIPVASGGIHVWHMPALTEIFGDDSVLQFGGGTLGHPWGNAPGAVANRVALEACVQARNEGRDLAQEGNEIIREACKWSPELA.

N6,N6,N6-trimethyllysine is present on K5. The substrate site is built by N114 and T164. K166 serves as the catalytic Proton acceptor. K168 serves as a coordination point for substrate. 3 residues coordinate Mg(2+): K192, D194, and E195. At K192 the chain carries N6-carboxylysine. H285 functions as the Proton acceptor in the catalytic mechanism. Substrate is bound by residues R286, H318, and S370.

This sequence belongs to the RuBisCO large chain family. Type I subfamily. Heterohexadecamer of 8 large chains and 8 small chains; disulfide-linked. The disulfide link is formed within the large subunit homodimers. Requires Mg(2+) as cofactor. Post-translationally, the disulfide bond which can form in the large chain dimeric partners within the hexadecamer appears to be associated with oxidative stress and protein turnover.

The protein resides in the plastid. It localises to the chloroplast. It carries out the reaction 2 (2R)-3-phosphoglycerate + 2 H(+) = D-ribulose 1,5-bisphosphate + CO2 + H2O. The catalysed reaction is D-ribulose 1,5-bisphosphate + O2 = 2-phosphoglycolate + (2R)-3-phosphoglycerate + 2 H(+). Functionally, ruBisCO catalyzes two reactions: the carboxylation of D-ribulose 1,5-bisphosphate, the primary event in carbon dioxide fixation, as well as the oxidative fragmentation of the pentose substrate in the photorespiration process. Both reactions occur simultaneously and in competition at the same active site. This is Ribulose bisphosphate carboxylase large chain from Camassia leichtlinii (Western quamash).